We begin with the raw amino-acid sequence, 89 residues long: Pyrin domain-containing protein 1 (89 aa).

The Pyrin domain maps to 1 to 89; sequence MGTKREAILK…EEAARLQRAA (89 aa).

In terms of assembly, interacts with PYCARD/ASC (via pyrin domain). Post-translationally, phosphorylated. As to expression, predominantly expressed in monocytes, macrophages and granulocytes.

It is found in the cytoplasm. In terms of biological role, associates with PYCARD/ASC and modulates its ability to collaborate with MEFV/pyrin and NLRP3/cryopyrin in NF-kappa-B and pro-caspase-1 activation. Suppresses kinase activity of NF-kappa-B inhibitor kinase (IKK) complex, expression of NF-kappa-B inducible genes and inhibits NF-kappa-B activation by cytokines and LPS. This Homo sapiens (Human) protein is Pyrin domain-containing protein 1.